We begin with the raw amino-acid sequence, 149 residues long: Calmodulin-1 (149 aa).

Ala2 bears the N-acetylalanine mark. EF-hand domains are found at residues Glu8–Asn43, Pro44–Asp79, Asp81–Lys116, and Leu117–Lys149. Asp21 is a binding site for Ca(2+). Position 22 is an N6-acetyllysine; alternate (Lys22). Residue Lys22 forms a Glycyl lysine isopeptide (Lys-Gly) (interchain with G-Cter in SUMO2); alternate linkage. Lys22 is covalently cross-linked (Glycyl lysine isopeptide (Lys-Gly) (interchain with G-Cter in ubiquitin); alternate). 4 residues coordinate Ca(2+): Asp23, Asp25, Thr27, and Glu32. Position 45 is a phosphothreonine; by CaMK4 (Thr45). Residues Asp57, Asp59, Asn61, Thr63, and Glu68 each contribute to the Ca(2+) site. A necessary and sufficient for interaction with PCP4 region spans residues Met77–Lys149. Phosphoserine is present on Ser82. Position 94 (Asp94) interacts with Ca(2+). Lys95 is subject to N6-acetyllysine. 3 residues coordinate Ca(2+): Asp96, Asn98, and Tyr100. The residue at position 100 (Tyr100) is a Phosphotyrosine. Phosphoserine is present on Ser102. A Ca(2+)-binding site is contributed by Glu105. The residue at position 111 (Thr111) is a Phosphothreonine. An N6,N6,N6-trimethyllysine; alternate modification is found at Lys116. Lys116 is subject to N6-methyllysine; alternate. Positions 130, 132, 134, and 136 each coordinate Ca(2+). Residue Tyr139 is modified to Phosphotyrosine. Glu141 provides a ligand contact to Ca(2+).

Belongs to the calmodulin family. Homotetramer. Interacts with MYO1C, MYO5A and RRAD. Interacts with MYO10. Interacts with CEP97, CCP110, TTN/titin and SRY. Interacts with USP6; the interaction is calcium dependent. Interacts with CDK5RAP2. Interacts with SCN5A. Interacts with RYR1. Interacts with FCHO1. Interacts with MIP in a 1:2 stoichiometry; the interaction with the cytoplasmic domains from two MIP subunits promotes MIP water channel closure. Interacts with ORAI1; this may play a role in the regulation of ORAI1-mediated calcium transport. Interacts with IQCF1. Interacts with SYT7. Interacts with CEACAM1 (via cytoplasmic domain); this interaction is in a calcium dependent manner and reduces homophilic cell adhesion through dissociation of dimer. Interacts with RYR2; regulates RYR2 calcium-release channel activity. Interacts with PCP4; regulates calmodulin calcium-binding. Interacts with the heterotetrameric KCNQ2 and KCNQ3 channel; the interaction is calcium-independent, constitutive and participates in the proper assembly of a functional heterotetrameric M channel. Interacts with alpha-synuclein/SNCA. Interacts with SLC9A1 in a calcium-dependent manner. In the absence of Ca(+2), interacts with GIMAP4 (via IQ domain). Interacts with SCN8A; the interaction modulates the inactivation rate of SCN8A. Interaction with KIF1A; the interaction is increased in presence of calcium and increases neuronal dense core vesicles motility. Interacts with KCNN3. Interacts with KCNQ1 (via C-terminus); forms a heterooctameric structure (with 4:4 KCNQ1:CALM stoichiometry) in a calcium-independent manner. Interacts with PIK3C3; the interaction modulates PIK3C3 kinase activity. Interacts with HINT1; interaction increases in the presence of calcium ions. Interacts with HINT3. Interacts with GARIN2; in mature sperm flagella. Interacts with IQUB. Interacts with SLC26A5 (via STAS domain); this interaction is calcium-dependent and the STAS domain interacts with only one lobe of CALM which is an elongated conformation. Ca(2+)-bound CALM1 binds CNGA1:CNGB1 channel (via CaM1 and CaM2 regions); this interaction modulates the affinity of the channel for cNMPs in response to intracellular Ca(2+) levels. Interacts with ITPR1; this interaction inhibits inositol 1,4,5 trisphosphate binding in both the presence and absence of calcium and 1,4,5 trisphosphate-induced calcium release in the presence of calcium. Component of the SIFI complex. Interacts with KCNN4; this interaction allows channel opening. Interacts with KCNN2; this interaction regulates the channel activity through calcium-binding. In terms of assembly, (Microbial infection) Interacts with Rubella virus protease/methyltransferase p150. As to quaternary structure, (Microbial infection) Interacts with Legionella pneumophila glutamylase SidJ. (Microbial infection) Interacts with C.violaceum CopC. C.violaceum CopC interacts specifically with the apo form of calmodulin. In terms of assembly, (Microbial infection) Interacts with S.flexneri OspC1 and OspC3. S.flexneri OspC1 and OspC3 interact specifically with the apo form of calmodulin and prevents calcium-binding. Ubiquitination results in a strongly decreased activity. Post-translationally, phosphorylation results in a decreased activity.

It is found in the cytoplasm. It localises to the cytoskeleton. The protein resides in the spindle. Its subcellular location is the spindle pole. The protein localises to the microtubule organizing center. It is found in the centrosome. It localises to the cell projection. The protein resides in the cilium. Its subcellular location is the flagellum. Its activity is regulated as follows. (Microbial infection) Inactivated by S.flexneri OspC1 and OspC3 proteins, which specifically bind the apo-form of calmodulin, thereby preventing calcium-binding and activity. Functionally, calmodulin acts as part of a calcium signal transduction pathway by mediating the control of a large number of enzymes, ion channels, aquaporins and other proteins through calcium-binding. Calcium-binding is required for the activation of calmodulin. Among the enzymes to be stimulated by the calmodulin-calcium complex are a number of protein kinases, such as myosin light-chain kinases and calmodulin-dependent protein kinase type II (CaMK2), and phosphatases. Together with CCP110 and centrin, is involved in a genetic pathway that regulates the centrosome cycle and progression through cytokinesis. Is a regulator of voltage-dependent L-type calcium channels. Mediates calcium-dependent inactivation of CACNA1C. Positively regulates calcium-activated potassium channel activity of KCNN2. Forms a potassium channel complex with KCNQ1 and regulates electrophysiological activity of the channel via calcium-binding. Acts as a sensor to modulate the endoplasmic reticulum contacts with other organelles mediated by VMP1:ATP2A2. In terms of biological role, (Microbial infection) Required for Legionella pneumophila SidJ glutamylase activity. Its function is as follows. (Microbial infection) Required for C.violaceum CopC and S.flexneri OspC3 arginine ADP-riboxanase activity. The sequence is that of Calmodulin-1 from Homo sapiens (Human).